The following is an 85-amino-acid chain: MEAARGWDEEVMKWLAVAICLAMVGMAVMPAFQPLNLAFELYYGHHESLPITAASAAYEGIVITATLAAAAATAELVHLLLQQFL.

2 helical membrane passes run 13-35 (KWLAVAICLAMVGMAVMPAFQPL) and 59-81 (EGIVITATLAAAAATAELVHLLL).

It localises to the cell membrane. This is an uncharacterized protein from Archaeoglobus fulgidus (strain ATCC 49558 / DSM 4304 / JCM 9628 / NBRC 100126 / VC-16).